An 878-amino-acid chain; its full sequence is MSAQHLHSCKFYRLPLEIIPLICRFLSVQDIQSFIRVFPSFQTILDSSNDLFWKKKNYELRIRRNRLLRGSYAAGVSSSAMNGFVNGTQISSTPAEREYYSKSDEIKNICGLPPGPMKVEQIGHAIDHLVSETHTVDHLGSSIKASFFHIDDVPLEWISSICMQVQSFFSPAAREAISSLKSRTTTSNLLLSLFVGILFEDDLWYFFNTLYMLSSTSAIEFAYFLDSIFTVVRTDYEHYRDPLSQTLITSCTRIHNIVAVIESPYDEPNTKGLTSEQKMIVECQLNPGEVLKVKAFAGTGKTKALLEFAKSRPKDKILYVAFNKAAKEDAELRFPFNVKCSTMHGLAYGAILAQADLPQAKLERQLSNSTIASLLSLQVAFPKANRKNNPGTPSASLVASHIMFTLNRFMHSTDWQLGFRHISKRSLEVTKLSKEKLLAYTKKLWSLIVNFEYTHAPLIPDAYMKLLHLYEFPNIFSKYDYILFDEAQDFTPCMVDLIYRQKHARIVIVGDAHQCIYGFRGANACAFNENLYPSTKQLCLTKSFRFGNSVAKYANFLLSLKGENVKLKGVQNDHAYWSSASNPNNVSGAFRFFPHTIIFRTNKELILQSIRLSVSLPKEIPIAILGSMRKKAFQLLRSGSELAHGQRPSHPKLKDFSSWGEFEVHVKNSAEEDAELALVYDMADELFSESFLSRLDNCEKRLMDSKDDGDNGIILATAHQSKGLEWDNVQLGNDFRPKFDSVSFSRIGSSRYLQEEINILYVALTRAKKRLILNDTITKLYALECGLVRFAGGILTEDQLQPGKVALFVDWQIDKFSFFYETPAEGYNLLVEANEKSVWDIFFGVLSGAWQNYIANTSERLKRSMLFIENQLFAVHDQ.

In terms of domain architecture, F-box spans 8–56 (SCKFYRLPLEIIPLICRFLSVQDIQSFIRVFPSFQTILDSSNDLFWKKK).

The protein belongs to the helicase family. UvrD subfamily. As to quaternary structure, part of the E3 ubiquitin ligase Skp1-Cullin-1-F-box (SCF) complex. Interacts with skp1 and ssb1. It depends on Mg(2+) as a cofactor. Mn(2+) serves as cofactor.

Its subcellular location is the cytoplasm. The protein resides in the nucleus. It catalyses the reaction Couples ATP hydrolysis with the unwinding of duplex DNA by translocating in the 3'-5' direction.. It carries out the reaction ATP + H2O = ADP + phosphate + H(+). It participates in protein modification; protein ubiquitination. Functionally, involved in ATP-dependent DNA-unwinding in a 3' to 5' direction, and ATP-ase activities stimulated by the single-stranded DNA-binding protein ssb1. Essential for viability and normal growth of stationary phase cells and in the absence of either srs2 or rqh1 DNA helicase. Involved in DNA recombination repair of strand breaks and stalled or collapsed replication forks, on the rhp51-dependent pathway: promotes rhp51 filament dissolution from stalled forks, thereby inhibiting homologous recombination and preventing excessive recombination. Ubiquitination and DNA helicase activities are essential for controlling rhp51-dependent recombination in the absence of rad22. Plays a role in the processing of toxic recombination intermediates. Promotes proper chromosome segregation. The polypeptide is F-box DNA helicase protein 1 (fbh1) (Schizosaccharomyces pombe (strain 972 / ATCC 24843) (Fission yeast)).